The sequence spans 201 residues: Recombination protein RecR (201 aa).

The segment at 57-72 (CADCRTFTEQDVCNIC) adopts a C4-type zinc-finger fold. One can recognise a Toprim domain in the interval 81 to 176 (GQICVVESPA…EASRIAHGVP (96 aa)).

Belongs to the RecR family.

In terms of biological role, may play a role in DNA repair. It seems to be involved in an RecBC-independent recombinational process of DNA repair. It may act with RecF and RecO. The polypeptide is Recombination protein RecR (Salmonella agona (strain SL483)).